The sequence spans 333 residues: Biotin synthase (333 aa).

Residues 47-276 (FFKNQMEFCS…KSEIRLCGGR (230 aa)) form the Radical SAM core domain. C65, C69, and C72 together coordinate [4Fe-4S] cluster. 4 residues coordinate [2Fe-2S] cluster: C109, C141, C201, and R271.

Belongs to the radical SAM superfamily. Biotin synthase family. In terms of assembly, homodimer. Requires [4Fe-4S] cluster as cofactor. [2Fe-2S] cluster serves as cofactor.

It catalyses the reaction (4R,5S)-dethiobiotin + (sulfur carrier)-SH + 2 reduced [2Fe-2S]-[ferredoxin] + 2 S-adenosyl-L-methionine = (sulfur carrier)-H + biotin + 2 5'-deoxyadenosine + 2 L-methionine + 2 oxidized [2Fe-2S]-[ferredoxin]. Its pathway is cofactor biosynthesis; biotin biosynthesis; biotin from 7,8-diaminononanoate: step 2/2. Catalyzes the conversion of dethiobiotin (DTB) to biotin by the insertion of a sulfur atom into dethiobiotin via a radical-based mechanism. The protein is Biotin synthase of Sulfurihydrogenibium sp. (strain YO3AOP1).